The sequence spans 468 residues: ATP synthase subunit beta (468 aa).

155 to 162 is a binding site for ATP; sequence GGAGVGKT.

The protein belongs to the ATPase alpha/beta chains family. In terms of assembly, F-type ATPases have 2 components, CF(1) - the catalytic core - and CF(0) - the membrane proton channel. CF(1) has five subunits: alpha(3), beta(3), gamma(1), delta(1), epsilon(1). CF(0) has three main subunits: a(1), b(2) and c(9-12). The alpha and beta chains form an alternating ring which encloses part of the gamma chain. CF(1) is attached to CF(0) by a central stalk formed by the gamma and epsilon chains, while a peripheral stalk is formed by the delta and b chains.

It is found in the cell membrane. The enzyme catalyses ATP + H2O + 4 H(+)(in) = ADP + phosphate + 5 H(+)(out). Its function is as follows. Produces ATP from ADP in the presence of a proton gradient across the membrane. The catalytic sites are hosted primarily by the beta subunits. The polypeptide is ATP synthase subunit beta (Streptococcus gordonii (strain Challis / ATCC 35105 / BCRC 15272 / CH1 / DL1 / V288)).